Reading from the N-terminus, the 359-residue chain is Molybdenum import ATP-binding protein ModC (359 aa).

The ABC transporter domain occupies 1–233 (MSGLTVSIRG…IDAESEGGGV (233 aa)). 32–39 (GHSGAGKT) contributes to the ATP binding site. Residues 289–355 (AISIRNLLPV…VKAVSVDRAA (67 aa)) form the Mop domain.

This sequence belongs to the ABC transporter superfamily. Molybdate importer (TC 3.A.1.8) family. In terms of assembly, the complex is composed of two ATP-binding proteins (ModC), two transmembrane proteins (ModB) and a solute-binding protein (ModA).

It is found in the cell inner membrane. It catalyses the reaction molybdate(out) + ATP + H2O = molybdate(in) + ADP + phosphate + H(+). Its function is as follows. Part of the ABC transporter complex ModABC involved in molybdenum import. Responsible for energy coupling to the transport system. This Brucella melitensis biotype 1 (strain ATCC 23456 / CCUG 17765 / NCTC 10094 / 16M) protein is Molybdenum import ATP-binding protein ModC.